Consider the following 287-residue polypeptide: Large ribosomal subunit protein uL2 (287 aa).

Residues 221-287 (RGSVMNPCDH…SKRSRGGRDS (67 aa)) form a disordered region. Residues 258–287 (KTRKRNKPSNRFVLRKRRRTSKRSRGGRDS) are compositionally biased toward basic residues.

It belongs to the universal ribosomal protein uL2 family. As to quaternary structure, part of the 50S ribosomal subunit. Forms a bridge to the 30S subunit in the 70S ribosome.

Its function is as follows. One of the primary rRNA binding proteins. Required for association of the 30S and 50S subunits to form the 70S ribosome, for tRNA binding and peptide bond formation. It has been suggested to have peptidyltransferase activity; this is somewhat controversial. Makes several contacts with the 16S rRNA in the 70S ribosome. The protein is Large ribosomal subunit protein uL2 of Prochlorococcus marinus (strain MIT 9313).